The sequence spans 148 residues: CDC25-like phosphatase YCH1 (148 aa).

The residue at position 1 (Met-1) is an N-acetylmethionine. The 109-residue stretch at 29-137 (LREPFQVVDV…WQSVYGDDES (109 aa)) folds into the Rhodanese domain.

This sequence belongs to the MPI phosphatase family.

The protein resides in the cytoplasm. Its subcellular location is the nucleus. Functionally, protein phosphatase. The sequence is that of CDC25-like phosphatase YCH1 (YCH1) from Saccharomyces cerevisiae (strain ATCC 204508 / S288c) (Baker's yeast).